The chain runs to 499 residues: GTPase Der (499 aa).

2 consecutive EngA-type G domains span residues 3 to 166 and 213 to 386; these read PVVA…LETL and IKFA…QSAT. Residues 9–16, 56–60, 118–121, 219–226, 266–270, and 331–334 each bind GTP; these read GRPNVGKS, DTGGI, NKTD, DTAGV, and NKWD. One can recognise a KH-like domain in the interval 387–471; the sequence is RRTSTAMLTR…PVRVEFQESA (85 aa).

This sequence belongs to the TRAFAC class TrmE-Era-EngA-EngB-Septin-like GTPase superfamily. EngA (Der) GTPase family. As to quaternary structure, associates with the 50S ribosomal subunit.

Functionally, GTPase that plays an essential role in the late steps of ribosome biogenesis. In Aeromonas hydrophila subsp. hydrophila (strain ATCC 7966 / DSM 30187 / BCRC 13018 / CCUG 14551 / JCM 1027 / KCTC 2358 / NCIMB 9240 / NCTC 8049), this protein is GTPase Der.